A 145-amino-acid polypeptide reads, in one-letter code: Protein FimA (145 aa).

Belongs to the fimbrial protein family.

The protein localises to the fimbrium. This is Protein FimA (fimA) from Bordetella pertussis.